A 282-amino-acid chain; its full sequence is Bis(5'-nucleosyl)-tetraphosphatase, symmetrical (282 aa).

Belongs to the Ap4A hydrolase family.

It carries out the reaction P(1),P(4)-bis(5'-adenosyl) tetraphosphate + H2O = 2 ADP + 2 H(+). In terms of biological role, hydrolyzes diadenosine 5',5'''-P1,P4-tetraphosphate to yield ADP. The polypeptide is Bis(5'-nucleosyl)-tetraphosphatase, symmetrical (Escherichia coli O7:K1 (strain IAI39 / ExPEC)).